Here is an 82-residue protein sequence, read N- to C-terminus: Omega-conotoxin-like 9 (82 aa).

Residues 1-22 (MKLTCMMIAAVLFLTTWTFVTA) form the signal peptide. Residues 23–51 (DDSRYGLKNLFPKARHEMKNPEASKLNKR) constitute a propeptide that is removed on maturation. 3 cysteine pairs are disulfide-bonded: cysteine 54/cysteine 69, cysteine 61/cysteine 73, and cysteine 68/cysteine 77.

This sequence belongs to the conotoxin O1 superfamily. Expressed by the venom duct.

Its subcellular location is the secreted. Functionally, omega-conotoxins act at presynaptic membranes, they bind and block voltage-gated calcium channels (Cav). In Conus striatus (Striated cone), this protein is Omega-conotoxin-like 9.